Reading from the N-terminus, the 374-residue chain is Probable trehalose-phosphate phosphatase 9 (374 aa).

Belongs to the trehalose phosphatase family. A divalent metal cation serves as cofactor.

It carries out the reaction alpha,alpha-trehalose 6-phosphate + H2O = alpha,alpha-trehalose + phosphate. It functions in the pathway glycan biosynthesis; trehalose biosynthesis. Removes the phosphate from trehalose 6-phosphate to produce free trehalose. Trehalose accumulation in plant may improve abiotic stress tolerance. In Oryza sativa subsp. japonica (Rice), this protein is Probable trehalose-phosphate phosphatase 9 (TPP9).